The primary structure comprises 890 residues: Alanine--tRNA ligase (890 aa).

Zn(2+)-binding residues include histidine 569, histidine 573, cysteine 671, and histidine 675.

The protein belongs to the class-II aminoacyl-tRNA synthetase family. Requires Zn(2+) as cofactor.

The protein resides in the cytoplasm. It catalyses the reaction tRNA(Ala) + L-alanine + ATP = L-alanyl-tRNA(Ala) + AMP + diphosphate. Its function is as follows. Catalyzes the attachment of alanine to tRNA(Ala) in a two-step reaction: alanine is first activated by ATP to form Ala-AMP and then transferred to the acceptor end of tRNA(Ala). Also edits incorrectly charged Ser-tRNA(Ala) and Gly-tRNA(Ala) via its editing domain. This is Alanine--tRNA ligase from Synechococcus sp. (strain CC9902).